The primary structure comprises 962 residues: UvrABC system protein A (962 aa).

38-45 (GISGSGKS) serves as a coordination point for ATP. 2 consecutive ABC transporter domains span residues 319 to 597 (WSKS…PDSL) and 617 to 944 (PSGR…RFLR). Residue 649–656 (GVSGSGKS) participates in ATP binding. The segment at 748-774 (CEACGGDGIIKIEMHFLADVYVPCEVC) adopts a C4-type zinc-finger fold.

The protein belongs to the ABC transporter superfamily. UvrA family. In terms of assembly, forms a heterotetramer with UvrB during the search for lesions.

The protein localises to the cytoplasm. Its function is as follows. The UvrABC repair system catalyzes the recognition and processing of DNA lesions. UvrA is an ATPase and a DNA-binding protein. A damage recognition complex composed of 2 UvrA and 2 UvrB subunits scans DNA for abnormalities. When the presence of a lesion has been verified by UvrB, the UvrA molecules dissociate. The protein is UvrABC system protein A of Methanothermobacter thermautotrophicus (strain ATCC 29096 / DSM 1053 / JCM 10044 / NBRC 100330 / Delta H) (Methanobacterium thermoautotrophicum).